The sequence spans 113 residues: Hydrogenase maturation factor HybF (113 aa).

Residues histidine 2 and glutamate 3 each coordinate Ni(2+). Zn(2+) contacts are provided by cysteine 73, cysteine 76, cysteine 89, and cysteine 92.

Belongs to the HypA/HybF family. HybF subfamily. In terms of assembly, monomer.

Functionally, involved in the maturation of [NiFe] hydrogenases. Required for nickel insertion into the metal center of the hydrogenase. HybF is involved in maturation of hydrogenases 1 and 2. It may partially substitute for the function of HypA and vice versa. The protein is Hydrogenase maturation factor HybF of Escherichia coli (strain K12).